The following is a 636-amino-acid chain: Biosynthetic arginine decarboxylase (636 aa).

Position 101 is an N6-(pyridoxal phosphate)lysine (K101). Residue F286 to Y296 coordinates substrate.

The protein belongs to the Orn/Lys/Arg decarboxylase class-II family. SpeA subfamily. It depends on Mg(2+) as a cofactor. Requires pyridoxal 5'-phosphate as cofactor.

The catalysed reaction is L-arginine + H(+) = agmatine + CO2. It participates in amine and polyamine biosynthesis; agmatine biosynthesis; agmatine from L-arginine: step 1/1. Functionally, catalyzes the biosynthesis of agmatine from arginine. In Shewanella denitrificans (strain OS217 / ATCC BAA-1090 / DSM 15013), this protein is Biosynthetic arginine decarboxylase.